Here is a 337-residue protein sequence, read N- to C-terminus: Bifunctional methylenetetrahydrofolate dehydrogenase/cyclohydrolase, mitochondrial (337 aa).

A mitochondrion-targeting transit peptide spans 1–30 (MATALCPLRALGQTAFRPRTRRLHLSAPRA). Substrate-binding positions include 79–83 (YVLNK) and 126–128 (VQL). Residues 195–197 (GRS) and arginine 228 each bind NAD(+). Substrate is bound at residue 304 to 308 (PGGVG).

It belongs to the tetrahydrofolate dehydrogenase/cyclohydrolase family. It depends on Mg(2+) as a cofactor.

Its subcellular location is the mitochondrion. It catalyses the reaction (6R)-5,10-methylene-5,6,7,8-tetrahydrofolate + NAD(+) = (6R)-5,10-methenyltetrahydrofolate + NADH. The catalysed reaction is (6R)-5,10-methenyltetrahydrofolate + H2O = (6R)-10-formyltetrahydrofolate + H(+). In terms of biological role, although its dehydrogenase activity is NAD-specific, it can also utilize NADP at a reduced efficiency. In Gallus gallus (Chicken), this protein is Bifunctional methylenetetrahydrofolate dehydrogenase/cyclohydrolase, mitochondrial (MTHFD2).